Reading from the N-terminus, the 395-residue chain is Flap endonuclease 1 (395 aa).

The interval 1 to 104 (MGIKHLYQII…GELAKRFMRK (104 aa)) is N-domain. Asp-34 is a binding site for Mg(2+). DNA contacts are provided by Arg-47 and Arg-70. The Mg(2+) site is built by Asp-86, Glu-158, Glu-160, Asp-179, and Asp-181. Residues 122–253 (EVEKFSRRTV…NTALKLIRDH (132 aa)) form an I-domain region. Glu-158 contributes to the DNA binding site. 2 residues coordinate DNA: Gly-231 and Asp-233. Mg(2+) is bound at residue Asp-233. Positions 341–349 (QQSRLEGFF) are interaction with PCNA. Positions 360–389 (AVLKRKHEEKLELQKKKKKEDAKAKKEAKS) are enriched in basic and acidic residues. The tract at residues 360–395 (AVLKRKHEEKLELQKKKKKEDAKAKKEAKSKPRGTT) is disordered.

This sequence belongs to the XPG/RAD2 endonuclease family. FEN1 subfamily. As to quaternary structure, interacts with PCNA. Three molecules of FEN1 bind to one PCNA trimer with each molecule binding to one PCNA monomer. PCNA stimulates the nuclease activity without altering cleavage specificity. The cofactor is Mg(2+). Post-translationally, phosphorylated. Phosphorylation upon DNA damage induces relocalization to the nuclear plasma.

It is found in the nucleus. The protein localises to the nucleolus. The protein resides in the nucleoplasm. It localises to the mitochondrion. In terms of biological role, structure-specific nuclease with 5'-flap endonuclease and 5'-3' exonuclease activities involved in DNA replication and repair. During DNA replication, cleaves the 5'-overhanging flap structure that is generated by displacement synthesis when DNA polymerase encounters the 5'-end of a downstream Okazaki fragment. It enters the flap from the 5'-end and then tracks to cleave the flap base, leaving a nick for ligation. Also involved in the long patch base excision repair (LP-BER) pathway, by cleaving within the apurinic/apyrimidinic (AP) site-terminated flap. Acts as a genome stabilization factor that prevents flaps from equilibrating into structures that lead to duplications and deletions. Also possesses 5'-3' exonuclease activity on nicked or gapped double-stranded DNA, and exhibits RNase H activity. Also involved in replication and repair of rDNA and in repairing mitochondrial DNA. In Ajellomyces capsulatus (strain NAm1 / WU24) (Darling's disease fungus), this protein is Flap endonuclease 1.